The following is a 382-amino-acid chain: Anhydro-N-acetylmuramic acid kinase (382 aa).

An ATP-binding site is contributed by G22–D29.

This sequence belongs to the anhydro-N-acetylmuramic acid kinase family.

The enzyme catalyses 1,6-anhydro-N-acetyl-beta-muramate + ATP + H2O = N-acetyl-D-muramate 6-phosphate + ADP + H(+). Its pathway is amino-sugar metabolism; 1,6-anhydro-N-acetylmuramate degradation. It functions in the pathway cell wall biogenesis; peptidoglycan recycling. Functionally, catalyzes the specific phosphorylation of 1,6-anhydro-N-acetylmuramic acid (anhMurNAc) with the simultaneous cleavage of the 1,6-anhydro ring, generating MurNAc-6-P. Is required for the utilization of anhMurNAc either imported from the medium or derived from its own cell wall murein, and thus plays a role in cell wall recycling. The sequence is that of Anhydro-N-acetylmuramic acid kinase from Burkholderia vietnamiensis (strain G4 / LMG 22486) (Burkholderia cepacia (strain R1808)).